The primary structure comprises 453 residues: tRNA hydroxylation protein P (453 aa).

This sequence belongs to the peptidase U32 family.

Its function is as follows. Involved in prephenate-dependent formation of 5-hydroxyuridine (ho5U) modification at position 34 in tRNAs, the first step in 5-carboxymethoxyuridine (cmo5U) biosynthesis. Involved differently in ho5U formation in each tRNA; tRNA(Leu3) and tRNA(Pro3) are major targets of TrhP. The sequence is that of tRNA hydroxylation protein P from Escherichia coli (strain K12).